The sequence spans 368 residues: 2-aminoethylphosphonate--pyruvate transaminase (368 aa).

N6-(pyridoxal phosphate)lysine is present on Lys-192.

It belongs to the class-V pyridoxal-phosphate-dependent aminotransferase family. PhnW subfamily. In terms of assembly, homodimer. Pyridoxal 5'-phosphate serves as cofactor.

The catalysed reaction is (2-aminoethyl)phosphonate + pyruvate = phosphonoacetaldehyde + L-alanine. In terms of biological role, involved in phosphonate degradation. In Pseudomonas putida (strain ATCC 47054 / DSM 6125 / CFBP 8728 / NCIMB 11950 / KT2440), this protein is 2-aminoethylphosphonate--pyruvate transaminase.